The primary structure comprises 365 residues: Coxsackievirus and adenovirus receptor homolog (365 aa).

Residues 1–19 (MALLLCFVLLCGVADFTSS) form the signal peptide. Ig-like C2-type domains lie at 20 to 136 (LSIT…FLLT) and 141 to 228 (PSGT…LRLD). Over 20–238 (LSITTPEQRI…VVPPSNRAGT (219 aa)) the chain is Extracellular. 3 cysteine pairs are disulfide-bonded: C41/C120, C146/C223, and C162/C212. N-linked (GlcNAc...) asparagine glycosylation is present at N106. Residues 239–259 (IAGAVIGTLLALVLIGAILFC) form a helical membrane-spanning segment. S-palmitoyl cysteine attachment occurs at residues C259 and C260. The Cytoplasmic portion of the chain corresponds to 260-365 (CHKKRREEKY…PAQSKDGSIV (106 aa)). A compositionally biased stretch (basic and acidic residues) spans 269-282 (YEKEVHHDIREDVP). The segment at 269 to 315 (YEKEVHHDIREDVPPPKSRTSTARSYIGSNHSSLGSMSPSNMEGYSK) is disordered. Positions 286 to 315 (SRTSTARSYIGSNHSSLGSMSPSNMEGYSK) are enriched in polar residues. Residues S297, S304, S306, S323, S332, and S363 each carry the phosphoserine modification. The PDZ-binding motif lies at 360–365 (KDGSIV).

In terms of assembly, monomer. May form homodimer. Interacts with LNX, MAGI1, DLG4, PRKCABP, TJP1 and CTNNB1. Interacts with MPDZ; recruits MPDZ to intercellular contact sites. Interacts with JAML (homodimeric form). N-glycosylated. In terms of processing, palmitoylated on Cys-259 and/or Cys-260; required for proper localization to the plasma membrane. Expressed in heart, brain, spleen, lung, liver, muscle, kidney, testis, spleen and skeletal muscle.

It is found in the cell membrane. Its subcellular location is the basolateral cell membrane. The protein resides in the cell junction. It localises to the tight junction. The protein localises to the adherens junction. Its function is as follows. Component of the epithelial apical junction complex that may function as a homophilic cell adhesion molecule and is essential for tight junction integrity. Also involved in transepithelial migration of leukocytes through adhesive interactions with JAML a transmembrane protein of the plasma membrane of leukocytes. The interaction between both receptors also mediates the activation of gamma-delta T-cells, a subpopulation of T-cells residing in epithelia and involved in tissue homeostasis and repair. Upon epithelial CXADR-binding, JAML induces downstream cell signaling events in gamma-delta T-cells through PI3-kinase and MAP kinases. It results in proliferation and production of cytokines and growth factors by T-cells that in turn stimulate epithelial tissues repair. The polypeptide is Coxsackievirus and adenovirus receptor homolog (Cxadr) (Rattus norvegicus (Rat)).